Consider the following 1276-residue polypeptide: Sterol regulatory element-binding protein cleavage-activating protein (1276 aa).

Over 1–18 (MTLTERLREKISQAFYNH) the chain is Cytoplasmic. A helical membrane pass occupies residues 19 to 39 (GLLCASYPIPIILFTGLCILA). Topologically, residues 40 to 279 (CCYPLLKLPL…NLVHVHFKEE (240 aa)) are lumenal. Residues 46–284 (KLPLPGTGPV…HFKEEIGIAE (239 aa)) form a loop-1 region. Residues 60-81 (PVKGYSPPPADSDHKQGEPSEQ) are disordered. N-linked (GlcNAc...) asparagine glycosylation occurs at Asn-263. The helical transmembrane segment at 280-300 (IGIAELIPLVTTYIILFAYIY) threads the bilayer. The SSD domain maps to 284-442 (ELIPLVTTYI…MLFFTTVLSI (159 aa)). The Cytoplasmic segment spans residues 301–312 (FSTRKIDMVKSK). A helical transmembrane segment spans residues 313–333 (WGLALAAVVTVLSSLLMSVGL). Residues 334–344 (CTLFGLTPTLN) lie on the Lumenal side of the membrane. The helical transmembrane segment at 345-365 (GGEIFPYLVVVIGLENVLVLT) threads the bilayer. Over 366 to 401 (KSVVSTPVDLEVKLRIAQGLSSESWSIMKNVATELG) the chain is Cytoplasmic. The helical transmembrane segment at 402 to 422 (IILIGYFTLVPAIQEFCLFAV) threads the bilayer. Position 423 (Val-423) is a topological domain, lumenal. The helical transmembrane segment at 424–444 (GLVSDFFLQMLFFTTVLSIDI) threads the bilayer. At 445–518 (RRMELADLNK…FLARTRLAQR (74 aa)) the chain is on the cytoplasmic side. Residues 447 to 452 (MELADL) carry the ER export signal motif. Glycyl lysine isopeptide (Lys-Gly) (interchain with G-Cter in ubiquitin) cross-links involve residues Lys-454 and Lys-466. Residues 519–539 (LIMAGTVVWIGILVYTDPAGL) form a helical membrane-spanning segment. Residues 535–710 (DPAGLRTYLA…QTHGDITLYK (176 aa)) form a loop-7 region. Residues 540–707 (RTYLAAQVTE…GGTQTHGDIT (168 aa)) lie on the Lumenal side of the membrane. N-linked (GlcNAc...) asparagine glycosylation is found at Asn-590 and Asn-641. A helical membrane pass occupies residues 708-728 (LYKVAALGLAAGIVLVLLLLC). The Cytoplasmic segment spans residues 729–1276 (LYRVLCPRNY…YVPSVLEKLD (548 aa)). Positions 731–1276 (RVLCPRNYGQ…YVPSVLEKLD (546 aa)) are interaction with SREBF2. Residues 771-811 (VLRGHLMDIECLASDGMLLVSCCLAGQVCVWDAQTGDCLTR) form a WD 1 repeat. A phosphoserine mark is found at Ser-821, Ser-837, Ser-843, Ser-850, Ser-905, and Ser-934. Residues 834 to 903 (ERLSDGGKAS…RHRAGCGRSR (70 aa)) form a disordered region. The segment at 928–958 (SALRPPSPGPPLPQASQEEGTAPEKGSPPLA) is disordered. WD repeat units lie at residues 949–999 (APEK…LCCS) and 1002–1039 (EISSGITALVFLDRRIVAARLNGSLDFFSLETHTSLSP). Arg-1048 is modified (omega-N-methylarginine). WD repeat units follow at residues 1074–1111 (AHQKPITALRAAAGRLVTGSQDHTLRVFRLEDSCCLFT), 1114–1152 (GHSGAITTVYIDQTMVLASGGQDGAICLWDVLTGSRVSH), 1155–1192 (AHRGDVTSLTCTTSCVISSGLDDFINIWDRSTGIKLYS), and 1194–1232 (QQDLGCGASLGVISDNLLVTGGQGCVSFWDLNYGDLLQT).

The protein belongs to the WD repeat SCAP family. In terms of assembly, membrane region forms a homotetramer. Component of the SCAP-SREBP complex (composed of SCAP and SREBF1/SREBP1 or SREBF2/SREBP2); interacts with SREBF1/SREBP1 or SREBF2/SREBP2 through its C-terminal cytoplasmic domain. Forms a ternary complex with INSIG1 or INSIG2 through its transmembrane domains at high sterol concentrations. Interacts with PAQR3; the interaction anchors the SCAP-SREBP complex to the Golgi apparatus in low cholesterol conditions. Interacts with the SEC23-SEC24 complex in a SAR1-GTP-dependent manner through an ER export signal in its third cytoplasmic loop. Interacts with RNF139; the interaction inhibits the interaction of SCAP with SEC24B and hampering the ER to Golgi transport of the SCAP-SREBP complex. Interacts with SPRING1. Ubiquitinated at Lys-454 and Lys-466. RNF145 triggers ubiquitination of SCAP, likely inhibiting SCAP-SREBP complex transport to the Golgi apparatus and the subsequent processing/maturation of SREBF2/SREBP2.

The protein localises to the endoplasmic reticulum membrane. It is found in the golgi apparatus membrane. The protein resides in the cytoplasmic vesicle. It localises to the COPII-coated vesicle membrane. Escort protein required for cholesterol as well as lipid homeostasis. Regulates export of the SCAP-SREBP complex from the endoplasmic reticulum to the Golgi upon low cholesterol, thereby regulating the processing of sterol regulatory element-binding proteins (SREBPs) SREBF1/SREBP1 and SREBF2/SREBP2. At high sterol concentrations, formation of a ternary complex with INSIG (INSIG1 or INSIG2) leads to mask the ER export signal in SCAP, promoting retention of the complex in the endoplasmic reticulum. Low sterol concentrations trigger release of INSIG, a conformational change in the SSD domain of SCAP, unmasking of the ER export signal, promoting recruitment into COPII-coated vesicles and transport of the SCAP-SREBP to the Golgi: in the Golgi, SREBPs are then processed, releasing the transcription factor fragment of SREBPs from the membrane, its import into the nucleus and up-regulation of LDLR, INSIG1 and the mevalonate pathway. Binds cholesterol via its SSD domain. The chain is Sterol regulatory element-binding protein cleavage-activating protein from Rattus norvegicus (Rat).